Reading from the N-terminus, the 188-residue chain is Probable manganese efflux pump MntP (188 aa).

A run of 5 helical transmembrane segments spans residues 3 to 23 (ITATVLLAFGMSMDAFAASVG), 66 to 86 (LEWNHWIAFVLLIFLGGRMII), 106 to 128 (WLLVTTAIATSLDAMAVGVGLAF), 143 to 163 (ATLIMSTLGMMVGRFIGSIIG), and 168 to 188 (ILGGLVLIGIGVQILWTHFHG).

The protein belongs to the MntP (TC 9.B.29) family.

It localises to the cell inner membrane. Probably functions as a manganese efflux pump. This chain is Probable manganese efflux pump MntP, found in Shigella sonnei (strain Ss046).